The chain runs to 132 residues: Histone H2B.1 (132 aa).

Positions 1–13 are enriched in low complexity; it reads MSSKASKAPASKA. The disordered stretch occupies residues 1–40; it reads MSSKASKAPASKAPAEKKPAAKKTSSSVDASKKRTKTRKE. Lysine 7 bears the N6-acetyllysine; alternate mark. Lysine 7 participates in a covalent cross-link: Glycyl lysine isopeptide (Lys-Gly) (interchain with G-Cter in SUMO); alternate. Serine 11 carries the post-translational modification Phosphoserine. At lysine 12 the chain carries N6-acetyllysine. Residue lysine 17 is modified to N6-acetyllysine; alternate. Residue lysine 17 forms a Glycyl lysine isopeptide (Lys-Gly) (interchain with G-Cter in SUMO); alternate linkage. Residue lysine 18 forms a Glycyl lysine isopeptide (Lys-Gly) (interchain with G-Cter in SUMO) linkage. Lysine 125 participates in a covalent cross-link: Glycyl lysine isopeptide (Lys-Gly) (interchain with G-Cter in ubiquitin).

Belongs to the histone H2B family. The nucleosome is a histone octamer containing two molecules each of H2A, H2B, H3 and H4 assembled in one H3-H4 heterotetramer and two H2A-H2B heterodimers. The octamer wraps approximately 147 bp of DNA. Post-translationally, monoubiquitinated by the UBC2-BRE1 complex to form H2BK123ub1. H2BK123ub1 gives a specific tag for epigenetic transcriptional activation and is also prerequisite for H3K4me and H3K79me formation. H2BK123ub1 also modulates the formation of double-strand breaks during meiosis and is a prerequisite for DNA-damage checkpoint activation. Phosphorylated by STE20 to form H2BS10ph during progression through meiotic prophase. May be correlated with chromosome condensation. In terms of processing, acetylated by GCN5 to form H2BK11ac and H2BK16ac. H2BK16ac can also be formed by ESA1. Acetylation of N-terminal lysines and particularly formation of H2BK11acK16ac has a positive effect on transcription. Post-translationally, sumoylation to form H2BK6su and probably also H2BK16su or H2BK17su, occurs preferentially near the telomeres and represses gene transcription.

Its subcellular location is the nucleus. It is found in the chromosome. Its function is as follows. Core component of nucleosome. Nucleosomes wrap and compact DNA into chromatin, limiting DNA accessibility to the cellular machineries which require DNA as a template. Histones thereby play a central role in transcription regulation, DNA repair, DNA replication and chromosomal stability. DNA accessibility is regulated via a complex set of post-translational modifications of histones, also called histone code, and nucleosome remodeling. This Eremothecium gossypii (strain ATCC 10895 / CBS 109.51 / FGSC 9923 / NRRL Y-1056) (Yeast) protein is Histone H2B.1 (HTB1).